A 477-amino-acid polypeptide reads, in one-letter code: Glycogen synthase (477 aa).

Position 15 (Lys15) interacts with ADP-alpha-D-glucose.

It belongs to the glycosyltransferase 1 family. Bacterial/plant glycogen synthase subfamily.

The enzyme catalyses [(1-&gt;4)-alpha-D-glucosyl](n) + ADP-alpha-D-glucose = [(1-&gt;4)-alpha-D-glucosyl](n+1) + ADP + H(+). It functions in the pathway glycan biosynthesis; glycogen biosynthesis. Synthesizes alpha-1,4-glucan chains using ADP-glucose. The polypeptide is Glycogen synthase (Caldicellulosiruptor saccharolyticus (strain ATCC 43494 / DSM 8903 / Tp8T 6331)).